The sequence spans 143 residues: Transcriptional regulator MraZ (143 aa).

SpoVT-AbrB domains follow at residues 5 to 47 (EYLH…PLDE) and 76 to 119 (ATEC…SQAL).

Belongs to the MraZ family. As to quaternary structure, forms oligomers.

The protein resides in the cytoplasm. It is found in the nucleoid. The polypeptide is Transcriptional regulator MraZ (Desulfitobacterium hafniense (strain DSM 10664 / DCB-2)).